The primary structure comprises 213 residues: Pyridoxine/pyridoxamine 5'-phosphate oxidase (213 aa).

FMN-binding positions include 60–65 (RMVLMK), 75–76 (YS), K82, and Q104. Residue K65 coordinates substrate. The substrate site is built by Y122 and R126. Residues 139-140 (QS) and W184 contribute to the FMN site. 190–192 (RLH) contacts substrate. R194 provides a ligand contact to FMN.

Belongs to the pyridoxamine 5'-phosphate oxidase family. Homodimer. It depends on FMN as a cofactor.

It catalyses the reaction pyridoxamine 5'-phosphate + O2 + H2O = pyridoxal 5'-phosphate + H2O2 + NH4(+). The catalysed reaction is pyridoxine 5'-phosphate + O2 = pyridoxal 5'-phosphate + H2O2. It participates in cofactor metabolism; pyridoxal 5'-phosphate salvage; pyridoxal 5'-phosphate from pyridoxamine 5'-phosphate: step 1/1. The protein operates within cofactor metabolism; pyridoxal 5'-phosphate salvage; pyridoxal 5'-phosphate from pyridoxine 5'-phosphate: step 1/1. In terms of biological role, catalyzes the oxidation of either pyridoxine 5'-phosphate (PNP) or pyridoxamine 5'-phosphate (PMP) into pyridoxal 5'-phosphate (PLP). The protein is Pyridoxine/pyridoxamine 5'-phosphate oxidase of Nitrobacter winogradskyi (strain ATCC 25391 / DSM 10237 / CIP 104748 / NCIMB 11846 / Nb-255).